Consider the following 139-residue polypeptide: ATP synthase epsilon chain (139 aa).

It belongs to the ATPase epsilon chain family. F-type ATPases have 2 components, CF(1) - the catalytic core - and CF(0) - the membrane proton channel. CF(1) has five subunits: alpha(3), beta(3), gamma(1), delta(1), epsilon(1). CF(0) has three main subunits: a, b and c.

The protein resides in the cell inner membrane. Produces ATP from ADP in the presence of a proton gradient across the membrane. This Haemophilus ducreyi (strain 35000HP / ATCC 700724) protein is ATP synthase epsilon chain.